A 266-amino-acid chain; its full sequence is Interleukin-1 beta (266 aa).

A propeptide spanning residues 1–113 (MATVPEPTNE…ETYDDDLLCD (113 aa)) is cleaved from the precursor.

The protein belongs to the IL-1 family. Monomer. In its precursor form, weakly interacts with full-length MEFV; the mature cytokine does not interact at all. Interacts with integrins ITGAV:ITGBV and ITGA5:ITGB1; integrin-binding is required for IL1B signaling. Interacts with cargo receptor TMED10; the interaction is direct and is required for the secretion of IL1B mature form. Interacts with HSP90AB1; the interaction facilitates cargo translocation into the ERGIC. Interacts with HSP90B1; the interaction facilitates cargo translocation into the ERGIC.

It is found in the cytoplasm. It localises to the cytosol. The protein resides in the secreted. Its subcellular location is the lysosome. The protein localises to the extracellular exosome. In terms of biological role, potent pro-inflammatory cytokine. Initially discovered as the major endogenous pyrogen, induces prostaglandin synthesis, neutrophil influx and activation, T-cell activation and cytokine production, B-cell activation and antibody production, and fibroblast proliferation and collagen production. Promotes Th17 differentiation of T-cells. Synergizes with IL12/interleukin-12 to induce IFNG synthesis from T-helper 1 (Th1) cells. Plays a role in angiogenesis by inducing VEGF production synergistically with TNF and IL6. Involved in transduction of inflammation downstream of pyroptosis: its mature form is specifically released in the extracellular milieu by passing through the gasdermin-D (GSDMD) pore. The sequence is that of Interleukin-1 beta (IL1B) from Delphinapterus leucas (Beluga whale).